The primary structure comprises 1052 residues: Membrane-bound transcription factor site-1 protease (1052 aa).

A signal peptide spans 1–17; sequence MKLVNIWLLLLVVLLCG. The propeptide occupies 18–186; it reads KKHLGDRLGK…TGRHSSRRLL (169 aa). Asn148 is a glycosylation site (N-linked (GlcNAc...) asparagine). Ser168 is subject to Phosphoserine. At 187–999 the chain is on the lumenal side; the sequence is RAIPRQVAQT…MPGRYNQEVG (813 aa). A Peptidase S8 domain is found at 190-472; the sequence is PRQVAQTLQA…HGKLDLLRAY (283 aa). Residue Asp218 is the Charge relay system of the active site. N-linked (GlcNAc...) asparagine glycosylation occurs at Asn236. Residue His249 is the Charge relay system of the active site. N-linked (GlcNAc...) asparagine glycosylation is present at Asn305. Residue Ser414 is the Charge relay system of the active site. Asn515 and Asn728 each carry an N-linked (GlcNAc...) asparagine glycan. Polar residues predominate over residues 877 to 887; sequence PSLSHSGNRQR. A disordered region spans residues 877–900; it reads PSLSHSGNRQRPPSGAGLAPPERM. N-linked (GlcNAc...) asparagine glycosylation occurs at Asn939. Residues 1000 to 1022 form a helical membrane-spanning segment; sequence QTIPVFAFLGAMVALAFFVVQIS. Topologically, residues 1023 to 1052 are cytoplasmic; it reads KAKSRPKRRRPRAKRPQLAQQAHPARTPSV. A compositionally biased stretch (basic residues) spans 1026 to 1037; that stretch reads SRPKRRRPRAKR. The disordered stretch occupies residues 1026–1052; it reads SRPKRRRPRAKRPQLAQQAHPARTPSV.

It belongs to the peptidase S8 family. As to quaternary structure, interacts with LYSET; this interaction bridges GNPTAB to MBTPS1. Ca(2+) is required as a cofactor. Post-translationally, the 148 kDa zymogen is processed progressively into two membrane-bound 120 and 106 kDa forms in the endoplasmic reticulum, and late into a secreted 98 kDa form. The propeptide is autocatalytically removed through an intramolecular cleavage after Leu-186. Further cleavage generates 14, 10, and 8 kDa intermediates. As to expression, widely expressed. In adult rat, highly expressed in anterior pituitary, thyroid and adrenal glands and in liver. In 2-day old rat, detected in developing skin, striated muscles, cardiac muscles, bones, teeth and internal organs. Highly expressed in retina, cerebellum, pituitary, submaxillary, thyroid and adrenal glands, molars, thymus, kidney and intestine.

It is found in the endoplasmic reticulum membrane. Its subcellular location is the golgi apparatus membrane. It carries out the reaction Processes precursors containing basic and hydrophobic/aliphatic residues at P4 and P2, respectively, with a relatively relaxed acceptance of amino acids at P1 and P3.. Inhibited by divalent copper and zinc ions, but not by nickel or cobalt. Inhibited by its prosegment, but not smaller fragments. Inhibited by 4-(2-aminoethyl)benzenesulfonyl fluoride (AEBSF), a serine protease inhibitor. In terms of biological role, serine protease that cleaves after hydrophobic or small residues, provided that Arg or Lys is in position P4: known substrates include SREBF1/SREBP1, SREBF2/SREBP2, BDNF, GNPTAB, ATF6, ATF6B and FAM20C. Cleaves substrates after Arg-Ser-Val-Leu (SREBP2), Arg-His-Leu-Leu (ATF6), Arg-Gly-Leu-Thr (BDNF) and its own propeptide after Arg-Arg-Leu-Leu. Catalyzes the first step in the proteolytic activation of the sterol regulatory element-binding proteins (SREBPs) SREBF1/SREBP1 and SREBF2/SREBP2. Also mediates the first step in the proteolytic activation of the cyclic AMP-dependent transcription factor ATF-6 (ATF6 and ATF6B). Mediates the protein cleavage of GNPTAB into subunit alpha and beta, thereby participating in biogenesis of lysosomes. Cleaves the propeptide from FAM20C which is required for FAM20C secretion from the Golgi apparatus membrane and for enhancement of FAM20C kinase activity, promoting osteoblast differentiation and biomineralization. Involved in the regulation of M6P-dependent Golgi-to-lysosome trafficking of lysosomal enzymes. It is required for the activation of CREB3L2/BBF2H7, a transcriptional activator of MIA3/TANGO and other genes controlling mega vesicle formation. Therefore, it plays a key role in the regulation of mega vesicle-mediated collagen trafficking. In astrocytes and osteoblasts, upon DNA damage and ER stress, mediates the first step of the regulated intramembrane proteolytic activation of the transcription factor CREB3L1, leading to the inhibition of cell-cycle progression. The sequence is that of Membrane-bound transcription factor site-1 protease (Mbtps1) from Rattus norvegicus (Rat).